We begin with the raw amino-acid sequence, 610 residues long: Ecto-NOX disulfide-thiol exchanger 2 (610 aa).

The 80-residue stretch at 128–207 (KTVFVGGLPE…GRLHVDFAQA (80 aa)) folds into the RRM domain. Coiled coils occupy residues 293–328 (IQSANSHVRRLVNEKAAHEKDMEEAKEKFKQALSGI) and 381–505 (RREE…KESC).

The protein belongs to the ENOX family. It depends on Cu cation as a cofactor. In terms of processing, glycosylated. Found in the sera of cancer patients with a wide variety of cancers including breast, prostate, lung and ovarian cancers, leukemias, and lymphomas. Not found in the serum of healthy volunteers or patients with disorders other than cancer. Probably shed into serum by cancer cells. Found on the cell borders of renal, kidney and ovarian carcinomas but not on the borders of surrounding non-cancerous stromal cells.

The protein resides in the cell membrane. Its subcellular location is the secreted. It is found in the extracellular space. Inhibited by the antitumor sulfonylurea LY181984, the vabilloid capsaicin, and retinoids. Its function is as follows. May be involved in cell growth. Probably acts as a terminal oxidase of plasma electron transport from cytosolic NAD(P)H via hydroquinones to acceptors at the cell surface. Hydroquinone oxidase activity alternates with a protein disulfide-thiol interchange/oxidoreductase activity which may control physical membrane displacements associated with vesicle budding or cell enlargement. The activities oscillate with a period length of 22 minutes and play a role in control of the ultradian cellular biological clock. This Homo sapiens (Human) protein is Ecto-NOX disulfide-thiol exchanger 2 (ENOX2).